The following is a 126-amino-acid chain: Large-conductance mechanosensitive channel (126 aa).

The next 3 helical transmembrane spans lie at 14–34 (VIDL…VTSL), 40–60 (MPLL…FTFV), and 67–87 (GLFI…FLFI).

The protein belongs to the MscL family. In terms of assembly, homopentamer.

Its subcellular location is the cell membrane. Functionally, channel that opens in response to stretch forces in the membrane lipid bilayer. May participate in the regulation of osmotic pressure changes within the cell. The sequence is that of Large-conductance mechanosensitive channel from Bacillus licheniformis (strain ATCC 14580 / DSM 13 / JCM 2505 / CCUG 7422 / NBRC 12200 / NCIMB 9375 / NCTC 10341 / NRRL NRS-1264 / Gibson 46).